Reading from the N-terminus, the 611-residue chain is Chaperone protein HscA (611 aa).

The protein belongs to the heat shock protein 70 family.

Functionally, chaperone involved in the maturation of iron-sulfur cluster-containing proteins. Has a low intrinsic ATPase activity which is markedly stimulated by HscB. Involved in the maturation of IscU. The polypeptide is Chaperone protein HscA (Buchnera aphidicola subsp. Acyrthosiphon pisum (strain 5A)).